The chain runs to 504 residues: ATP synthase subunit alpha, chloroplastic (504 aa).

Position 170–177 (170–177) interacts with ATP; sequence GDRQTGKT.

This sequence belongs to the ATPase alpha/beta chains family. As to quaternary structure, F-type ATPases have 2 components, CF(1) - the catalytic core - and CF(0) - the membrane proton channel. CF(1) has five subunits: alpha(3), beta(3), gamma(1), delta(1), epsilon(1). CF(0) has four main subunits: a, b, b' and c.

Its subcellular location is the plastid. It is found in the chloroplast thylakoid membrane. It catalyses the reaction ATP + H2O + 4 H(+)(in) = ADP + phosphate + 5 H(+)(out). Functionally, produces ATP from ADP in the presence of a proton gradient across the membrane. The alpha chain is a regulatory subunit. The sequence is that of ATP synthase subunit alpha, chloroplastic from Pyropia yezoensis (Susabi-nori).